The chain runs to 92 residues: MNRLLQRQLFLENLLVGTNSMFHQISMRSINTCCRSLQRILDHLILLQTIHSPAFRLDRMRLRQMQMLACLWIHQHNHDLQATLGAIKWISP.

The protein belongs to the rotavirus A NSP6 family. As to quaternary structure, interacts with NSP2 and NSP5.

The protein localises to the host cytoplasm. It is found in the host mitochondrion. The sequence is that of Non-structural protein 6 from Homo sapiens (Human).